The chain runs to 1496 residues: Rap guanine nucleotide exchange factor 2 (1496 aa).

Disordered stretches follow at residues 40 to 59 (HVSSSHSGCSITSDSGSSSL) and 68 to 101 (SEAGDMDLSGLPETAVDSEDDDDEEDIERASDPL). The segment covering 83 to 94 (VDSEDDDDEEDI) has biased composition (acidic residues). 135–254 (AFANMTMSVR…VEEEGEIVMV (120 aa)) contacts a nucleoside 3',5'-cyclic phosphate. The N-terminal Ras-GEF domain occupies 267–380 (KGHIVIKGTS…RLLNIACAAK (114 aa)). In terms of domain architecture, PDZ spans 385–470 (LMTLTKPSRE…ITVKTNLFVF (86 aa)). A Phosphoserine modification is found at serine 501. Residues 606-692 (PDQVLRVFKA…GRYYLKNNME (87 aa)) form the Ras-associating domain. Threonine 644 carries the post-translational modification Phosphothreonine; by PLK2. A Ras-GEF domain is found at 717–944 (STVEVATQLS…SQGSANATVL (228 aa)). Serine 806 is subject to Phosphoserine; by PLK2. Serine 930 carries the phosphoserine modification. 2 positions are modified to phosphoserine; by PLK2: serine 933 and serine 1022. The tract at residues 1002–1051 (PATSTLPKNPGDKKPVKSETSPVAPRAGPQQKVQPQQPLAQPQPPHKVSQ) is disordered. Residues 1030–1041 (PQQKVQPQQPLA) are compositionally biased toward low complexity. Phosphoserine is present on residues serine 1079, serine 1088, serine 1094, serine 1115, serine 1119, and serine 1158. The interval 1093–1159 (GSLERHRKQA…RSSIVSNSSF (67 aa)) is disordered. Composition is skewed to low complexity over residues 1110-1124 (SSQLSSPPTSPQSSP) and 1140-1159 (SDSGHSEISSRSSIVSNSSF). The residue at position 1175 (serine 1175) is a Phosphoserine; by PLK2. 3 disordered regions span residues 1224–1256 (STEELSHDQGDRASLDAADSGRGSWTSCSSGSH), 1303–1369 (STKY…EEAK), and 1390–1496 (RKEG…VSAV). The span at 1227–1237 (ELSHDQGDRAS) shows a compositional bias: basic and acidic residues. Composition is skewed to polar residues over residues 1246–1256 (GSWTSCSSGSH) and 1306–1330 (YNRQNQSRESLEQAQSRASWASSTG). A compositionally biased stretch (low complexity) spans 1440-1455 (PTEAPAPGQTPPAAAA). Residues 1485–1496 (AEEDEDEQVSAV) show a composition bias toward acidic residues.

This sequence belongs to the RAPGEF2 family. Found in a complex, at least composed of KIDINS220, MAGI2, NTRK1 and RAPGEF2; the complex is mainly formed at late endosomes in a neuronal growth factor (NGF)-dependent manner. Interacts (via C-terminal domain) with NEDD4 (via WW domains); this interaction leads to ubiquitination and degradation via the proteasome pathway in a cAMP-independent manner. Interacts with MAGI1 (via PDZ domain). Interacts with ADRB1 (via C-terminal PDZ motif); the interaction is direct. Interacts (via Ras-associating domain) with RAP1A (via GTP-bound active form). Interacts weakly with HRAS (via GDP- and GTP-bound forms). Interacts (via C-terminal domain) with MAGI2 (via PDZ and WW domains). Interacts with CDH1, CTNNB1 and TJP1. In terms of processing, ubiquitinated by NEDD4, leading to proteasomal degradation. Phosphorylation by PLK2 promotes its activity. In terms of tissue distribution, expressed in all layers of the cerebral cortex, hippocampus and cerebellum. Expressed in the cortical plate, cingulate cortex and the subventricular zone. Expressed in neurons and endocrine cells (at protein level). Expressed in melanoma cells.

The protein localises to the cytoplasm. It is found in the perinuclear region. Its subcellular location is the cell membrane. It localises to the late endosome. The protein resides in the cell junction. Its function is as follows. Functions as a guanine nucleotide exchange factor (GEF), which activates Rap and Ras family of small GTPases by exchanging bound GDP for free GTP in a cAMP-dependent manner. Serves as a link between cell surface receptors and Rap/Ras GTPases in intracellular signaling cascades. Also acts as an effector for Rap1 by direct association with Rap1-GTP thereby leading to the amplification of Rap1-mediated signaling. Shows weak activity on HRAS. It is controversial whether RAPGEF2 binds cAMP and cGMP or not. Its binding to ligand-activated beta-1 adrenergic receptor ADRB1 leads to the Ras activation through the G(s)-alpha signaling pathway. Involved in the cAMP-induced Ras and Erk1/2 signaling pathway that leads to sustained inhibition of long term melanogenesis by reducing dendrite extension and melanin synthesis. Also provides inhibitory signals for cell proliferation of melanoma cells and promotes their apoptosis in a cAMP-independent nanner. Regulates cAMP-induced neuritogenesis by mediating the Rap1/B-Raf/ERK signaling through a pathway that is independent on both PKA and RAPGEF3/RAPGEF4. Involved in neuron migration and in the formation of the major forebrain fiber connections forming the corpus callosum, the anterior commissure and the hippocampal commissure during brain development. Involved in neuronal growth factor (NGF)-induced sustained activation of Rap1 at late endosomes and in brain-derived neurotrophic factor (BDNF)-induced axon outgrowth of hippocampal neurons. Plays a role in the regulation of embryonic blood vessel formation and in the establishment of basal junction integrity and endothelial barrier function. May be involved in the regulation of the vascular endothelial growth factor receptor KDR and cadherin CDH5 expression at allantois endothelial cell-cell junctions. The protein is Rap guanine nucleotide exchange factor 2 (Rapgef2) of Mus musculus (Mouse).